The following is a 514-amino-acid chain: ATP synthase subunit alpha (514 aa).

Residue G170–T177 coordinates ATP.

It belongs to the ATPase alpha/beta chains family. As to quaternary structure, F-type ATPases have 2 components, CF(1) - the catalytic core - and CF(0) - the membrane proton channel. CF(1) has five subunits: alpha(3), beta(3), gamma(1), delta(1), epsilon(1). CF(0) has three main subunits: a(1), b(2) and c(9-12). The alpha and beta chains form an alternating ring which encloses part of the gamma chain. CF(1) is attached to CF(0) by a central stalk formed by the gamma and epsilon chains, while a peripheral stalk is formed by the delta and b chains.

The protein resides in the cell inner membrane. It carries out the reaction ATP + H2O + 4 H(+)(in) = ADP + phosphate + 5 H(+)(out). Produces ATP from ADP in the presence of a proton gradient across the membrane. The alpha chain is a regulatory subunit. The polypeptide is ATP synthase subunit alpha (Pseudomonas putida (strain ATCC 700007 / DSM 6899 / JCM 31910 / BCRC 17059 / LMG 24140 / F1)).